Reading from the N-terminus, the 281-residue chain is HTH-type transcriptional activator RamA (281 aa).

An HTH luxR-type domain is found at 213 to 278 (RIKQTTKLSA…EAVNAARRIG (66 aa)).

RamA is a master regulator of acetate metabolism. It positively controls the expression of acnA, aceA, aceB, ack, pta and ramB genes in the presence of acetate. RamA is also a positive regulator of rpf2 gene expression during growth on glucose as the sole carbon source. The chain is HTH-type transcriptional activator RamA from Corynebacterium glutamicum (strain ATCC 13032 / DSM 20300 / JCM 1318 / BCRC 11384 / CCUG 27702 / LMG 3730 / NBRC 12168 / NCIMB 10025 / NRRL B-2784 / 534).